Consider the following 293-residue polypeptide: Probable endoribonuclease YicC (293 aa).

It belongs to the YicC/YloC family. It depends on a divalent metal cation as a cofactor.

Its function is as follows. Negatively modulates sporulation, probably in response to nutrient conditions. Effects expression of sporulation regulator spo0A in an indirect manner, possibly via repression of the sinRR' operon. Functionally, probably a ssRNA endonuclease. In terms of biological role, might contribute to small RNA (sRNA) regulation. The sequence is that of Probable endoribonuclease YicC from Clostridioides difficile (strain 630) (Peptoclostridium difficile).